Reading from the N-terminus, the 666-residue chain is N-acetylgalactosaminyltransferase 6 (666 aa).

At 1–11 (MRRPNLKWIVK) the chain is on the cytoplasmic side. Residues 12 to 31 (ASLLLLISLTLFVLITSWIS) traverse the membrane as a helical; Signal-anchor for type II membrane protein segment. Over 32–666 (STPYTNKPVH…NYSQDLVLSL (635 aa)) the chain is Lumenal. Positions 90–126 (EPVEEEVDNPHPADDEPQQQPQEELQMAAPADASVKK) are disordered. The segment covering 107–120 (QQQPQEELQMAAPA) has biased composition (low complexity). An N-linked (GlcNAc...) asparagine glycan is attached at N181. 5 disulfide bridges follow: C192-C421, C412-C491, C531-C548, C577-C594, and C621-C636. Residues 201 to 311 (LPTVSVIIIF…YNWLPPLLEP (111 aa)) form a catalytic subdomain A region. D242 and R272 together coordinate substrate. N285 is a glycosylation site (N-linked (GlcNAc...) asparagine). D295 provides a ligand contact to Mn(2+). S296 is a substrate binding site. H297 is a binding site for Mn(2+). The catalytic subdomain B stretch occupies residues 367 to 429 (PFKSPIMAGG…PCSRIGHIYR (63 aa)). W398 serves as a coordination point for substrate. H426 is a Mn(2+) binding site. Residue R429 participates in substrate binding. Residues 518–648 (AMGALQNVGN…DNRFQQWNFG (131 aa)) form the Ricin B-type lectin domain. 2 N-linked (GlcNAc...) asparagine glycosylation sites follow: N651 and N657.

The protein belongs to the glycosyltransferase 2 family. GalNAc-T subfamily. It depends on Mn(2+) as a cofactor. As to expression, expressed during oogenesis, in the somatically derived follicle cells that surround the developing oocyte, which are involved in the maturation of the oocyte and construction of the egg shell, as well as playing a role in subsequent embryonic pattern formation. Expressed in the salivary glands from embryonic stage 12 onwards, becoming stronger at stage 13. During embryonic stages 12-13, also expressed in the posterior midgut and hindgut. During embryonic stages 14-15, expression continues in the hindgut. Expression is detected in the epidermis and antennomaxillary complex during embryonic stages 16-17. In third instar larvae, ubiquitously expressed in wing, eye-antennal, leg and haltere imaginal disks.

The protein localises to the golgi apparatus membrane. It carries out the reaction L-seryl-[protein] + UDP-N-acetyl-alpha-D-galactosamine = a 3-O-[N-acetyl-alpha-D-galactosaminyl]-L-seryl-[protein] + UDP + H(+). It catalyses the reaction L-threonyl-[protein] + UDP-N-acetyl-alpha-D-galactosamine = a 3-O-[N-acetyl-alpha-D-galactosaminyl]-L-threonyl-[protein] + UDP + H(+). It functions in the pathway protein modification; protein glycosylation. Its function is as follows. Glycopeptide transferase involved in O-linked oligosaccharide biosynthesis, which catalyzes the transfer of an N-acetyl-D-galactosamine residue to an already glycosylated peptide. In contrast to other proteins of the family, it does not act as a peptide transferase that transfers GalNAc onto serine or threonine residue on the protein receptor, but instead requires the prior addition of a GalNAc on a peptide before adding additional GalNAc moieties. Some peptide transferase activity is however not excluded, considering that its appropriate peptide substrate may remain unidentified. Prefers the diglycosylated Muc5AC-3/13 as substrate. Might have a role in protein O-glycosylation in the Golgi and thereby in establishing and/or maintaining a proper secretory apparatus structure. This Drosophila melanogaster (Fruit fly) protein is N-acetylgalactosaminyltransferase 6.